A 156-amino-acid chain; its full sequence is Succinate dehydrogenase [ubiquinone] cytochrome b small subunit 1, mitochondrial (156 aa).

The N-terminal 25 residues, 1 to 25 (MLSAVRRAIPLSARILRTSLIQRCA), are a transit peptide targeting the mitochondrion. Over 26 to 59 (GATSAAVTGAAPPQFDPIAAEKGFKPLHSHGTLF) the chain is Mitochondrial matrix. The chain crosses the membrane as a helical span at residues 60 to 78 (KIERYFAAAMVPLIPAAYF). The Mitochondrial intermembrane segment spans residues 79-83 (IHGRE). Residues 84-104 (MDLCLALALTLHVHWGVWGVV) form a helical membrane-spanning segment. H95 contacts heme b. The Mitochondrial matrix portion of the chain corresponds to 105 to 119 (NDYGRPFVLGDTLAA). Y107 is an a rhodoquinol binding site. Residues 120–141 (AVRVGAYIFTACLLAGLLYFNE) form a helical membrane-spanning segment. Over 142–156 (HDVGLTRAFEMVWEL) the chain is Mitochondrial intermembrane.

It belongs to the CybS family. As to quaternary structure, component of the mitochondrial electron transport chain complex II composed of four subunits: a flavoprotein (Fp), an iron-sulfur protein (Ip), and a large cytochrome b (CybL) subunit and a small cytochrome b (CybS) subunit. There are 2 developmental stage-specific forms of complex II which have the Ip and CybL subunits in common. Complex II from the free-living larvae (aerobic environment) acts as a succinate dehydrogenase and is composed of the common subunit Ip and CybL and the stage specific subunits FpL and CybSL. Complex II from parasitic larvae and adults (anaerobic environment) acts as a fumarate reductase and is composed of the common subunit Ip and CybL and the stage specific subunits FpA and CybSA. Heme b serves as cofactor. As to expression, expressed in adult muscles (at protein level).

The protein resides in the mitochondrion inner membrane. Functionally, membrane-bound small subunit (CybS) of the mitochondrial electron transport chain complex II, which together with the membrane-bound large subunit (CybL), anchor the catalytic subunits to the inner mitochondria membrane. During the parasitic larvae and adult stages, which occur in an anaerobic environment, complex II acts as a fumarate reductase by transferring electrons from rhodoquinol to fumarate. The sequence is that of Succinate dehydrogenase [ubiquinone] cytochrome b small subunit 1, mitochondrial from Ascaris suum (Pig roundworm).